Consider the following 174-residue polypeptide: MSVMQNNSEKSKWFLPGILGGLATTMKHLLKNLFNQKKMMTLNYPEEKYEYSPRFKGNHVLTVKKDGSLRCTACMLCATNCPAECIKITAAEHNDPTVEKFPISYEIDILRCVFCGFCEEACPVDAIRLGPEWQTPGVNGANFIYDINHLAYRPNLKGGILTHVDDEERHKAGI.

2 consecutive 4Fe-4S ferredoxin-type domains span residues 61-91 (LTVK…ITAA) and 103-132 (ISYE…LGPE). Cysteine 71, cysteine 74, cysteine 77, cysteine 81, cysteine 112, cysteine 115, cysteine 118, and cysteine 122 together coordinate [4Fe-4S] cluster.

Belongs to the complex I 23 kDa subunit family. In terms of assembly, NDH-1 is composed of 14 different subunits. Subunits NuoA, H, J, K, L, M, N constitute the membrane sector of the complex. The cofactor is [4Fe-4S] cluster.

The protein localises to the cell inner membrane. The catalysed reaction is a quinone + NADH + 5 H(+)(in) = a quinol + NAD(+) + 4 H(+)(out). NDH-1 shuttles electrons from NADH, via FMN and iron-sulfur (Fe-S) centers, to quinones in the respiratory chain. The immediate electron acceptor for the enzyme in this species is believed to be ubiquinone. Couples the redox reaction to proton translocation (for every two electrons transferred, four hydrogen ions are translocated across the cytoplasmic membrane), and thus conserves the redox energy in a proton gradient. The polypeptide is NADH-quinone oxidoreductase subunit I (Bdellovibrio bacteriovorus (strain ATCC 15356 / DSM 50701 / NCIMB 9529 / HD100)).